Consider the following 201-residue polypeptide: Large ribosomal subunit protein bL25 (201 aa).

The segment at 179–201 (VSITAPRVEAEKTEEEEPESTEE) is disordered. Acidic residues predominate over residues 190 to 201 (KTEEEEPESTEE).

This sequence belongs to the bacterial ribosomal protein bL25 family. CTC subfamily. Part of the 50S ribosomal subunit; part of the 5S rRNA/L5/L18/L25 subcomplex. Contacts the 5S rRNA. Binds to the 5S rRNA independently of L5 and L18.

Functionally, this is one of the proteins that binds to the 5S RNA in the ribosome where it forms part of the central protuberance. This is Large ribosomal subunit protein bL25 from Prosthecochloris aestuarii (strain DSM 271 / SK 413).